A 168-amino-acid chain; its full sequence is Zinc finger A20 and AN1 domain-containing stress-associated protein 1 (168 aa).

The segment at 13-47 adopts an A20-type zinc-finger fold; it reads PSEPKLCVKGCGFFGSPSNMNLCSKCYRDIRATEE. Residues Cys-19, Cys-23, Cys-35, and Cys-38 each coordinate Zn(2+). The interval 49-105 is disordered; that stretch reads TASAKAAVEKSLNPNKPKTQPQQSQEITQGVLGSGSSSSSTRGGDSAAAPLDPPKST. The span at 60 to 76 shows a compositional bias: polar residues; it reads LNPNKPKTQPQQSQEIT. Over residues 82–94 the composition is skewed to low complexity; the sequence is SGSSSSSTRGGDS. The AN1-type zinc finger occupies 103-149; sequence KSTATRCLSCNKKVGVTGFKCRCGSTFCGTHRYPESHECQFDFKGVA. Positions 109, 112, 123, 125, 130, 133, 139, and 141 each coordinate Zn(2+).

Functionally, may be involved in environmental stress response. The polypeptide is Zinc finger A20 and AN1 domain-containing stress-associated protein 1 (SAP1) (Arabidopsis thaliana (Mouse-ear cress)).